Here is a 619-residue protein sequence, read N- to C-terminus: Probable ATP-dependent RNA helicase DDX59 (619 aa).

A disordered region spans residues 1–101 (MFVPRSLKIK…KSFSKTQRWP (101 aa)). Over residues 12 to 27 (SSNDDLKSGEAKKSKP) the composition is skewed to basic and acidic residues. Residue lysine 26 forms a Glycyl lysine isopeptide (Lys-Gly) (interchain with G-Cter in SUMO2) linkage. Over residues 59 to 76 (ASSTNSPSCQLAEVSSTG) the composition is skewed to polar residues. Position 64 is a phosphoserine (serine 64). A compositionally biased stretch (basic and acidic residues) spans 79–91 (EGVKDSHPSEEPV). The HIT-type zinc-finger motif lies at 104-133 (GEPVCVVCGRYGEYICDKTDEDVCSLECKA). Residue serine 160 is modified to Phosphoserine. Positions 203–231 (IDFEHCGFPETLNQNLKKSGYEVPTPIQM) match the Q motif motif. The Helicase ATP-binding domain occupies 234 to 405 (IPVGLLGRDI…DQLLHNPVRI (172 aa)). 247-254 (ADTGSGKT) serves as a coordination point for ATP. The short motif at 353–356 (DEAD) is the DEAD box element. The 164-residue stretch at 416 to 579 (SVRQIILWVE…ILPPQLLNSP (164 aa)) folds into the Helicase C-terminal domain. Residues 583-594 (EQKRKEQQKDRQ) are compositionally biased toward basic and acidic residues. Positions 583 to 603 (EQKRKEQQKDRQTQNSLVTGA) are disordered.

The protein belongs to the DEAD box helicase family. DDX59 subfamily. As to quaternary structure, interacts (via HIT-type zinc finger) with the RUVBL1/RUVBL2 complex in the presence of ADP.

Its subcellular location is the cytoplasm. It localises to the nucleus. The enzyme catalyses ATP + H2O = ADP + phosphate + H(+). The sequence is that of Probable ATP-dependent RNA helicase DDX59 (Ddx59) from Mus musculus (Mouse).